The chain runs to 1590 residues: Pentafunctional AROM polypeptide (1590 aa).

Residues 1 to 387 (MGSTTFENPT…YEPKASVVED (387 aa)) are 3-dehydroquinate synthase. NAD(+) is bound by residues 49 to 51 (DTN), 86 to 89 (ENSK), 117 to 119 (GGV), and D122. Residue R133 coordinates 7-phospho-2-dehydro-3-deoxy-D-arabino-heptonate. 142–143 (TT) lines the NAD(+) pocket. 7-phospho-2-dehydro-3-deoxy-D-arabino-heptonate-binding residues include D149 and K155. An NAD(+)-binding site is contributed by K164. N165 provides a ligand contact to 7-phospho-2-dehydro-3-deoxy-D-arabino-heptonate. Residues 182–185 (FLET) and N193 each bind NAD(+). E197 serves as a coordination point for Zn(2+). 7-phospho-2-dehydro-3-deoxy-D-arabino-heptonate contacts are provided by residues 197–200 (EVVK) and K253. The active-site Proton acceptor; for 3-dehydroquinate synthase activity is E263. 7-phospho-2-dehydro-3-deoxy-D-arabino-heptonate contacts are provided by residues 267 to 271 (RNILN) and H274. H274 is a binding site for Zn(2+). Catalysis depends on H278, which acts as the Proton acceptor; for 3-dehydroquinate synthase activity. Residues H290 and K359 each contribute to the 7-phospho-2-dehydro-3-deoxy-D-arabino-heptonate site. A Zn(2+)-binding site is contributed by H290. Residues 400–841 (VRPSVPETLN…WDILSKSFQV (442 aa)) are EPSP synthase. C823 serves as the catalytic For EPSP synthase activity. The shikimate kinase stretch occupies residues 863 to 1055 (DKSIFIIGMR…RNKPQSFFVS (193 aa)). 870–877 (GMRGAGKT) provides a ligand contact to ATP. The tract at residues 1056–1276 (LTMPDISGAA…AAPGQLSAAE (221 aa)) is 3-dehydroquinase. The active-site Proton acceptor; for 3-dehydroquinate dehydratase activity is H1179. The active-site Schiff-base intermediate with substrate; for 3-dehydroquinate dehydratase activity is K1207. A shikimate dehydrogenase region spans residues 1289–1590 (PKSFYLFGTP…KMDKHPTFVC (302 aa)).

In the N-terminal section; belongs to the sugar phosphate cyclases superfamily. Dehydroquinate synthase family. The protein in the 2nd section; belongs to the EPSP synthase family. This sequence in the 3rd section; belongs to the shikimate kinase family. It in the 4th section; belongs to the type-I 3-dehydroquinase family. In the C-terminal section; belongs to the shikimate dehydrogenase family. As to quaternary structure, homodimer. Zn(2+) serves as cofactor.

The protein localises to the cytoplasm. The enzyme catalyses 7-phospho-2-dehydro-3-deoxy-D-arabino-heptonate = 3-dehydroquinate + phosphate. It catalyses the reaction 3-dehydroquinate = 3-dehydroshikimate + H2O. The catalysed reaction is shikimate + NADP(+) = 3-dehydroshikimate + NADPH + H(+). It carries out the reaction shikimate + ATP = 3-phosphoshikimate + ADP + H(+). The enzyme catalyses 3-phosphoshikimate + phosphoenolpyruvate = 5-O-(1-carboxyvinyl)-3-phosphoshikimate + phosphate. Its pathway is metabolic intermediate biosynthesis; chorismate biosynthesis; chorismate from D-erythrose 4-phosphate and phosphoenolpyruvate: step 2/7. The protein operates within metabolic intermediate biosynthesis; chorismate biosynthesis; chorismate from D-erythrose 4-phosphate and phosphoenolpyruvate: step 3/7. It participates in metabolic intermediate biosynthesis; chorismate biosynthesis; chorismate from D-erythrose 4-phosphate and phosphoenolpyruvate: step 4/7. It functions in the pathway metabolic intermediate biosynthesis; chorismate biosynthesis; chorismate from D-erythrose 4-phosphate and phosphoenolpyruvate: step 5/7. Its pathway is metabolic intermediate biosynthesis; chorismate biosynthesis; chorismate from D-erythrose 4-phosphate and phosphoenolpyruvate: step 6/7. In terms of biological role, the AROM polypeptide catalyzes 5 consecutive enzymatic reactions in prechorismate polyaromatic amino acid biosynthesis. This Sclerotinia sclerotiorum (White mold) protein is Pentafunctional AROM polypeptide.